The primary structure comprises 466 residues: uncharacterized protein (466 aa).

Belongs to the myoviridae tail sheath protein family.

This is an uncharacterized protein from Bacillus subtilis (strain 168).